The sequence spans 166 residues: Phospholipase A2 inhibitor A1 (166 aa).

An N-terminal signal peptide occupies residues M1 to G19. Residues L46 to E161 enclose the C-type lectin domain. Cystine bridges form between C83-C160 and C138-C152. N122 carries an N-linked (GlcNAc...) asparagine glycan.

Belongs to the alpha-type phospholipase A2 inhibitor family. As to quaternary structure, homotrimer; non-covalently linked. Expressed by the liver.

Its subcellular location is the secreted. Functionally, this phospholipase A2 inhibitor binds directly phospholipase A2 in the presence or absence of calcium. The protein is Phospholipase A2 inhibitor A1 of Bothrops neuwiedi (Neuwied's lancehead).